The following is a 548-amino-acid chain: Medium/long-chain-fatty-acid--CoA/3-oxocholest-4-en-26-oate--CoA ligase (548 aa).

ATP is bound by residues 174 to 182 (TGGTTGFPK), aspartate 415, arginine 430, and lysine 521. The span at 520–541 (GKPDYRWAKEQTEARPADDVHA) shows a compositional bias: basic and acidic residues. The interval 520–548 (GKPDYRWAKEQTEARPADDVHAGHVTSGG) is disordered.

The protein belongs to the ATP-dependent AMP-binding enzyme family.

The enzyme catalyses a medium-chain fatty acid + ATP + CoA = a medium-chain fatty acyl-CoA + AMP + diphosphate. The catalysed reaction is a long-chain fatty acid + ATP + CoA = a long-chain fatty acyl-CoA + AMP + diphosphate. It carries out the reaction (25S)-3-oxocholest-4-en-26-oate + ATP + CoA = (25S)-3-oxocholest-4-en-26-oyl-CoA + AMP + diphosphate. It functions in the pathway lipid metabolism; fatty acid biosynthesis. Its pathway is steroid metabolism; cholesterol metabolism. Catalyzes the activation of medium/long-chain fatty acids as acyl-coenzyme A (acyl-CoA), which are then transferred to the multifunctional polyketide synthase (PKS) type III for further chain extension. Also involved in the degradation of cholesterol via the degradation of the side chains of C-24 branched-chain sterols. Catalyzes the ATP-dependent CoA thioesterification of the sterol 3-oxocholest-4-en-26-oate to yield 3-oxocholest-4-en-26-oyl-CoA. This chain is Medium/long-chain-fatty-acid--CoA/3-oxocholest-4-en-26-oate--CoA ligase, found in Mycobacterium bovis (strain ATCC BAA-935 / AF2122/97).